The primary structure comprises 297 residues: uncharacterized protein (297 aa).

Disordered regions lie at residues 1–20 (MDTLPPATSEESFEIPNADV), 39–100 (IEKD…ENLG), and 174–297 (VQKA…NEDQ). An RRM domain is found at 101–179 (NDLFVSGIAS…RVLNVQKAKR (79 aa)). The residue at position 184 (S184) is a Phosphoserine. Basic and acidic residues-rich tracts occupy residues 209 to 223 (GGYRRNNYRDRDSNR) and 233 to 253 (PQREHSPGNYRKERYNVDSRP). Residues 254 to 263 (RRERHFHGRS) show a composition bias toward basic residues. Polar residues predominate over residues 287 to 297 (SHSSVPPNEDQ).

The protein resides in the nucleus. This is an uncharacterized protein from Schizosaccharomyces pombe (strain 972 / ATCC 24843) (Fission yeast).